The sequence spans 209 residues: Large ribosomal subunit protein bL9 (209 aa).

Positions 181–209 (EASEEGQELAAQREATEDAGADESEETEA) are disordered. Acidic residues predominate over residues 197–209 (EDAGADESEETEA).

The protein belongs to the bacterial ribosomal protein bL9 family.

Functionally, binds to the 23S rRNA. The protein is Large ribosomal subunit protein bL9 of Maricaulis maris (strain MCS10) (Caulobacter maris).